The sequence spans 460 residues: G-protein coupled receptor 22 (460 aa).

Residues 1-74 (MESMPSSLTH…YPVSFQVSLT (74 aa)) lie on the Cytoplasmic side of the membrane. A helical membrane pass occupies residues 75 to 95 (GFLMLEIVLGLSSNLTVLALY). Residues 96–114 (CMKSNLVSSVSNIVTMNLH) lie on the Extracellular side of the membrane. A helical transmembrane segment spans residues 115 to 135 (VLDVLVCVGCIPLTIVVVLLP). At 136 to 144 (LEGNNALIC) the chain is on the cytoplasmic side. The helical transmembrane segment at 145–165 (CFHEACVSFASVATAANVLAI) threads the bilayer. At 166–185 (TLDRYDISVRPANRVLTMGR) the chain is on the extracellular side. The chain crosses the membrane as a helical span at residues 186–206 (AVALLGSIWALSFFSFLVPFI). Topologically, residues 207 to 235 (EEGFFSQAGNERNQTEAEEPSNEYYTELG) are cytoplasmic. Residues 236 to 256 (LYYHLLAQIPIFFFTAVVMLV) form a helical membrane-spanning segment. The Extracellular portion of the chain corresponds to 257–343 (TYYKILQALN…ERQKRVFRMS (87 aa)). Residues 276–286 (VPKKKPRKKKT) show a composition bias toward basic residues. The tract at residues 276-309 (VPKKKPRKKKTISMTSTQPESTDASQSSAGRNAP) is disordered. The span at 287–305 (ISMTSTQPESTDASQSSAG) shows a compositional bias: polar residues. A helical transmembrane segment spans residues 344–364 (LLIISTFLLCWTPITVLNTVI). Over 365 to 377 (LSVGPSNFTVRLR) the chain is Cytoplasmic. Residues 378 to 398 (LGFLVMAYGTTIFHPLLYAFT) form a helical membrane-spanning segment. Residues 399–460 (RQKFQKVLKS…QKCLSSEDVE (62 aa)) lie on the Extracellular side of the membrane.

Belongs to the G-protein coupled receptor 1 family.

The protein localises to the cell membrane. Orphan G-protein coupled receptor that regulates cilia length and structure in the Kupffer's vesicle leading to the left-right asymmetry development by establishing a directional fluid flow. The chain is G-protein coupled receptor 22 (gpr22a) from Danio rerio (Zebrafish).